The sequence spans 504 residues: Maturase K (504 aa).

This sequence belongs to the intron maturase 2 family. MatK subfamily.

The protein resides in the plastid. Its subcellular location is the chloroplast. Functionally, usually encoded in the trnK tRNA gene intron. Probably assists in splicing its own and other chloroplast group II introns. In Amaranthus caudatus (Love-lies-bleeding), this protein is Maturase K.